We begin with the raw amino-acid sequence, 461 residues long: Photosystem II CP43 reaction center protein (461 aa).

The propeptide occupies Met1–Glu2. Thr3 carries the N-acetylthreonine modification. A Phosphothreonine modification is found at Thr3. Transmembrane regions (helical) follow at residues Leu57–Ala81, Leu122–Asn143, Lys166–Thr188, Gln243–Ser263, and Trp279–Ser300. [CaMn4O5] cluster is bound at residue Glu355. Residues Arg435–Pro459 form a helical membrane-spanning segment.

It belongs to the PsbB/PsbC family. PsbC subfamily. As to quaternary structure, PSII is composed of 1 copy each of membrane proteins PsbA, PsbB, PsbC, PsbD, PsbE, PsbF, PsbH, PsbI, PsbJ, PsbK, PsbL, PsbM, PsbT, PsbX, PsbY, PsbZ, Psb30/Ycf12, at least 3 peripheral proteins of the oxygen-evolving complex and a large number of cofactors. It forms dimeric complexes. Binds multiple chlorophylls and provides some of the ligands for the Ca-4Mn-5O cluster of the oxygen-evolving complex. It may also provide a ligand for a Cl- that is required for oxygen evolution. PSII binds additional chlorophylls, carotenoids and specific lipids. serves as cofactor.

The protein resides in the plastid. Its subcellular location is the chloroplast thylakoid membrane. One of the components of the core complex of photosystem II (PSII). It binds chlorophyll and helps catalyze the primary light-induced photochemical processes of PSII. PSII is a light-driven water:plastoquinone oxidoreductase, using light energy to abstract electrons from H(2)O, generating O(2) and a proton gradient subsequently used for ATP formation. In Stigeoclonium helveticum (Green alga), this protein is Photosystem II CP43 reaction center protein.